A 396-amino-acid chain; its full sequence is NADH-quinone oxidoreductase subunit D (396 aa).

This sequence belongs to the complex I 49 kDa subunit family. As to quaternary structure, NDH-1 is composed of 14 different subunits. Subunits NuoB, C, D, E, F, and G constitute the peripheral sector of the complex.

It is found in the cell inner membrane. It catalyses the reaction a quinone + NADH + 5 H(+)(in) = a quinol + NAD(+) + 4 H(+)(out). In terms of biological role, NDH-1 shuttles electrons from NADH, via FMN and iron-sulfur (Fe-S) centers, to quinones in the respiratory chain. The immediate electron acceptor for the enzyme in this species is believed to be ubiquinone. Couples the redox reaction to proton translocation (for every two electrons transferred, four hydrogen ions are translocated across the cytoplasmic membrane), and thus conserves the redox energy in a proton gradient. The chain is NADH-quinone oxidoreductase subunit D from Bartonella henselae (strain ATCC 49882 / DSM 28221 / CCUG 30454 / Houston 1) (Rochalimaea henselae).